A 497-amino-acid chain; its full sequence is Serine hydroxymethyltransferase (497 aa).

(6S)-5,6,7,8-tetrahydrofolate is bound by residues leucine 176 and 180–182; that span reads GHL. Position 289 is an N6-(pyridoxal phosphate)lysine (lysine 289).

Belongs to the SHMT family. Homodimer. The cofactor is pyridoxal 5'-phosphate.

It localises to the cytoplasm. The enzyme catalyses (6R)-5,10-methylene-5,6,7,8-tetrahydrofolate + glycine + H2O = (6S)-5,6,7,8-tetrahydrofolate + L-serine. The protein operates within one-carbon metabolism; tetrahydrofolate interconversion. Its pathway is amino-acid biosynthesis; glycine biosynthesis; glycine from L-serine: step 1/1. Functionally, catalyzes the reversible interconversion of serine and glycine with tetrahydrofolate (THF) serving as the one-carbon carrier. This reaction serves as the major source of one-carbon groups required for the biosynthesis of purines, thymidylate, methionine, and other important biomolecules. Also exhibits THF-independent aldolase activity toward beta-hydroxyamino acids, producing glycine and aldehydes, via a retro-aldol mechanism. This is Serine hydroxymethyltransferase from Chlamydia felis (strain Fe/C-56) (Chlamydophila felis).